The sequence spans 201 residues: Adenylyl-sulfate kinase (201 aa).

Position 35–42 (35–42 (GLSGSGKS)) interacts with ATP. Catalysis depends on Ser109, which acts as the Phosphoserine intermediate.

This sequence belongs to the APS kinase family.

The catalysed reaction is adenosine 5'-phosphosulfate + ATP = 3'-phosphoadenylyl sulfate + ADP + H(+). It participates in sulfur metabolism; hydrogen sulfide biosynthesis; sulfite from sulfate: step 2/3. Its function is as follows. Catalyzes the synthesis of activated sulfate. In Bacteroides thetaiotaomicron (strain ATCC 29148 / DSM 2079 / JCM 5827 / CCUG 10774 / NCTC 10582 / VPI-5482 / E50), this protein is Adenylyl-sulfate kinase.